The sequence spans 340 residues: Cobalt-precorrin-5B C(1)-methyltransferase (340 aa).

It belongs to the CbiD family.

It catalyses the reaction Co-precorrin-5B + S-adenosyl-L-methionine = Co-precorrin-6A + S-adenosyl-L-homocysteine. It functions in the pathway cofactor biosynthesis; adenosylcobalamin biosynthesis; cob(II)yrinate a,c-diamide from sirohydrochlorin (anaerobic route): step 6/10. Its function is as follows. Catalyzes the methylation of C-1 in cobalt-precorrin-5B to form cobalt-precorrin-6A. This Pyrobaculum aerophilum (strain ATCC 51768 / DSM 7523 / JCM 9630 / CIP 104966 / NBRC 100827 / IM2) protein is Cobalt-precorrin-5B C(1)-methyltransferase.